The primary structure comprises 121 residues: LOB domain-containing protein 23 (121 aa).

Residues 4–105 (KRCAACKYLR…NELAKTQAEI (102 aa)) form the LOB domain.

This sequence belongs to the LOB domain-containing protein family.

The chain is LOB domain-containing protein 23 (LBD23) from Arabidopsis thaliana (Mouse-ear cress).